We begin with the raw amino-acid sequence, 1413 residues long: DNA-directed RNA polymerase subunit beta' (1413 aa).

Cysteine 72, cysteine 74, cysteine 87, and cysteine 90 together coordinate Zn(2+). Residues aspartate 463, aspartate 465, and aspartate 467 each contribute to the Mg(2+) site. 4 residues coordinate Zn(2+): cysteine 811, cysteine 885, cysteine 892, and cysteine 895.

This sequence belongs to the RNA polymerase beta' chain family. As to quaternary structure, the RNAP catalytic core consists of 2 alpha, 1 beta, 1 beta' and 1 omega subunit. When a sigma factor is associated with the core the holoenzyme is formed, which can initiate transcription. Mg(2+) is required as a cofactor. It depends on Zn(2+) as a cofactor.

The catalysed reaction is RNA(n) + a ribonucleoside 5'-triphosphate = RNA(n+1) + diphosphate. In terms of biological role, DNA-dependent RNA polymerase catalyzes the transcription of DNA into RNA using the four ribonucleoside triphosphates as substrates. The protein is DNA-directed RNA polymerase subunit beta' of Ruegeria pomeroyi (strain ATCC 700808 / DSM 15171 / DSS-3) (Silicibacter pomeroyi).